Consider the following 365-residue polypeptide: Testis-specific serine/threonine-protein kinase 1 (365 aa).

Residues 12 to 272 (YIMGINLGEG…IDEILNHCWV (261 aa)) form the Protein kinase domain. ATP contacts are provided by residues 18–26 (LGEGSYAKV) and Lys41. Asp136 functions as the Proton acceptor in the catalytic mechanism. At Thr174 the chain carries Phosphothreonine. Positions 282–365 (GAINKEGESS…HPQQPSETHT (84 aa)) are disordered. Basic and acidic residues predominate over residues 303 to 330 (GADKKSATKLEPREEARSEARSESKPQE). Positions 331-347 (DTLQVVRQSENVGLSSE) are enriched in polar residues.

This sequence belongs to the protein kinase superfamily. CAMK Ser/Thr protein kinase family. In terms of assembly, interacts with TSSK2. Interacts with HSP90; this interaction stabilizes TSSK1. Mg(2+) is required as a cofactor. Post-translationally, autophosphorylated. In terms of processing, ubiquitinated; HSP90 activity negatively regulates ubiquitination and degradation. Testis-specific. Expressed only in postmeiotic spermatids at the final stages of cytodifferentiation in the seminiferous tubules (at protein level). Not detected in released sperms in the lumen of the seminiferous tubules and the epididymis.

It is found in the cytoplasm. Its subcellular location is the cytoplasmic vesicle. The protein localises to the secretory vesicle. The protein resides in the acrosome. It localises to the cell projection. It is found in the cilium. Its subcellular location is the flagellum. The catalysed reaction is L-seryl-[protein] + ATP = O-phospho-L-seryl-[protein] + ADP + H(+). It catalyses the reaction L-threonyl-[protein] + ATP = O-phospho-L-threonyl-[protein] + ADP + H(+). Its activity is regulated as follows. Activated by phosphorylation on Thr-174, potentially by autophosphorylation. Testis-specific serine/threonine-protein kinase required during spermatid development. Phosphorylates 'Ser-281' of TSKS. Involved in the late stages of spermatogenesis, during the reconstruction of the cytoplasm. During spermatogenesis, required for the transformation of a ring-shaped structure around the base of the flagellum originating from the chromatoid body. This Mus musculus (Mouse) protein is Testis-specific serine/threonine-protein kinase 1 (Tssk1b).